Consider the following 217-residue polypeptide: N-(5'-phosphoribosyl)anthranilate isomerase (217 aa).

It belongs to the TrpF family.

The catalysed reaction is N-(5-phospho-beta-D-ribosyl)anthranilate = 1-(2-carboxyphenylamino)-1-deoxy-D-ribulose 5-phosphate. The protein operates within amino-acid biosynthesis; L-tryptophan biosynthesis; L-tryptophan from chorismate: step 3/5. The sequence is that of N-(5'-phosphoribosyl)anthranilate isomerase from Bacillus velezensis (strain DSM 23117 / BGSC 10A6 / LMG 26770 / FZB42) (Bacillus amyloliquefaciens subsp. plantarum).